We begin with the raw amino-acid sequence, 563 residues long: MAQEVSEYLSQNPRVAAWVETLRCEGETDKHWRHRREFLLRNAGDLVPATDETADAESGARTRQLQQLVSFSMAWANHVFLGCRYPQKVMDKILSMAEGIKVTDAPIHTTRDELVAKVKKRGISSSNEGVEEPSKKRAVEGKNNSSVERDHGKKSAKTDRSAAQQENSSPSRGSSTKSESGGTSARSSSSGSHQDSATSEGDRSVCSQSSSNSSQVTAGSGKALESEAPHKRGSASFVSSLLKSSMNSHMTQSTDNRQQSGSPKKGALEGSSGSASQSSSEIEVPLLGSSGSAEVELPLLSCKSSSETASSGLTSKSSSEANISSSVSKNSSSSGSSLLTPQSSSTNPSLLTSKSTAQVAASLLATKSGASLGSVSQLAAKSGSQSSTSQLPSKSTSQASESSVKFACRKLTNEDIKQKQPFFNRLYKTVAWKLVAVGGFSPTVNHGELLNAAIEALKATLDVFFVPLKELADLPQNKSSQESIVCELRCKSVYLGTGCGKSKENAKAVASREALKLFLKKKVVVKICKRKYRGSEIEDLVLLDEEARPVNLPPALKHPQELL.

Alanine 2 is subject to N-acetylalanine. The 108-residue stretch at 19–126 folds into the XRN2-binding (XTBD) domain; sequence VETLRCEGET…KVKKRGISSS (108 aa). Disordered stretches follow at residues 122–289 and 304–351; these read GISS…LLGS and SSSE…PSLL. Serine 124 is modified (phosphoserine). Positions 147 to 160 are enriched in basic and acidic residues; that stretch reads VERDHGKKSAKTDR. Low complexity-rich tracts occupy residues 168-216 and 234-248; these read SSPS…SSQV and SASF…SMNS. Lysine 177 participates in a covalent cross-link: Glycyl lysine isopeptide (Lys-Gly) (interchain with G-Cter in SUMO1). At serine 234 the chain carries Phosphoserine. The span at 249–262 shows a compositional bias: polar residues; it reads HMTQSTDNRQQSGS. The segment covering 270–280 has biased composition (low complexity); the sequence is GSSGSASQSSS. A Phosphothreonine modification is found at threonine 340. Serine 371 bears the Phosphoserine mark. One can recognise a DRBM domain in the interval 445-520; sequence NHGELLNAAI…SREALKLFLK (76 aa).

It belongs to the CARF family. As to quaternary structure, interacts with CDKN2A/p14ARF, p53/TP53 and MDM2. Interacts with CHEK2 and MAPK3. Interacts with XRN2. Post-translationally, may be ubiquitinated.

It is found in the nucleus. The protein localises to the nucleoplasm. Regulates DNA damage response and cell proliferation in a dose-dependent manner through a number of signaling pathways involved in cell proliferation, apoptosis and senescence. This is CDKN2A-interacting protein (Cdkn2aip) from Mus musculus (Mouse).